Here is a 351-residue protein sequence, read N- to C-terminus: uncharacterized protein (351 aa).

An N-terminal signal peptide occupies residues 1 to 27; sequence MKNKKRVLIASSLSCAILLLSAATTQA. The tract at residues 28–71 is disordered; that stretch reads NSAHKDSQDQNKKEHVDKSQQKDKRNVTNKDKNSTVPDDIGKNG. Over residues 30–60 the composition is skewed to basic and acidic residues; sequence AHKDSQDQNKKEHVDKSQQKDKRNVTNKDKN.

The protein belongs to the aerolysin family.

This is an uncharacterized protein from Staphylococcus aureus (strain N315).